The sequence spans 397 residues: DnaJ homolog subfamily A member 4 (397 aa).

The 67-residue stretch at 4 to 70 (ETQYYDILGV…RDVYDQGGEQ (67 aa)) folds into the J domain. Position 18 is a phosphoserine (Ser-18). The segment at 122–206 (GVTKKLALQK…CSGAKVIREK (85 aa)) adopts a CR-type zinc-finger fold. 8 residues coordinate Zn(2+): Cys-135, Cys-138, Cys-151, Cys-154, Cys-178, Cys-181, Cys-194, and Cys-197. CXXCXGXG motif repeat units follow at residues 135-142 (CEKCEGVG), 151-158 (CPLCKGRG), 178-185 (CIECKGQG), and 194-201 (CESCSGAK). A Cysteine methyl ester modification is found at Cys-394. The S-farnesyl cysteine moiety is linked to residue Cys-394. Residues 395–397 (QTA) constitute a propeptide, removed in mature form.

The protein localises to the membrane. The sequence is that of DnaJ homolog subfamily A member 4 (DNAJA4) from Homo sapiens (Human).